The chain runs to 372 residues: F-box/kelch-repeat protein At2g44630 (372 aa).

The span at 1-13 (MSNADEPPQKTNQ) shows a compositional bias: polar residues. Residues 1 to 21 (MSNADEPPQKTNQPPSSSLTP) are disordered. Residues 21-67 (PPSLFSLPVDIVLNILALVPKRYYPILCCVSKSLRSLIRSPEIHKTR) form the F-box domain. Kelch repeat units lie at residues 136–181 (EIYC…LVGG) and 183–228 (IYVI…SVSL).

The chain is F-box/kelch-repeat protein At2g44630 from Arabidopsis thaliana (Mouse-ear cress).